Here is a 308-residue protein sequence, read N- to C-terminus: Glutaminase (308 aa).

Substrate contacts are provided by S66, N117, E161, N168, Y192, Y244, and V262.

The protein belongs to the glutaminase family. In terms of assembly, homotetramer.

It carries out the reaction L-glutamine + H2O = L-glutamate + NH4(+). This Salmonella agona (strain SL483) protein is Glutaminase.